The sequence spans 426 residues: Enolase (426 aa).

Position 163 (Gln-163) interacts with (2R)-2-phosphoglycerate. Glu-205 serves as the catalytic Proton donor. Residues Asp-242, Glu-283, and Asp-310 each contribute to the Mg(2+) site. (2R)-2-phosphoglycerate is bound by residues Lys-335, Arg-364, Ser-365, and Lys-386. Lys-335 acts as the Proton acceptor in catalysis.

This sequence belongs to the enolase family. The cofactor is Mg(2+).

The protein resides in the cytoplasm. It localises to the secreted. The protein localises to the cell surface. The catalysed reaction is (2R)-2-phosphoglycerate = phosphoenolpyruvate + H2O. Its pathway is carbohydrate degradation; glycolysis; pyruvate from D-glyceraldehyde 3-phosphate: step 4/5. Its function is as follows. Catalyzes the reversible conversion of 2-phosphoglycerate (2-PG) into phosphoenolpyruvate (PEP). It is essential for the degradation of carbohydrates via glycolysis. The polypeptide is Enolase (Clavibacter michiganensis subsp. michiganensis (strain NCPPB 382)).